Consider the following 203-residue polypeptide: Peptide deformylase (203 aa).

Positions 121 and 163 each coordinate Fe cation. Residue glutamate 164 is part of the active site. A Fe cation-binding site is contributed by histidine 167.

It belongs to the polypeptide deformylase family. Fe(2+) serves as cofactor.

The catalysed reaction is N-terminal N-formyl-L-methionyl-[peptide] + H2O = N-terminal L-methionyl-[peptide] + formate. Removes the formyl group from the N-terminal Met of newly synthesized proteins. Requires at least a dipeptide for an efficient rate of reaction. N-terminal L-methionine is a prerequisite for activity but the enzyme has broad specificity at other positions. The sequence is that of Peptide deformylase from Prochlorococcus marinus (strain MIT 9515).